The sequence spans 511 residues: MKLFLLLSAFGFCWAQYAPQTQSGRTSIVHLFEWRWVDIALECERYLGPKGFGGVQVSPPNENIVVTNPSRPWWERYQPVSYKLCTRSGNENEFRDMVTRCNNVGVRIYVDAVINHMCGSGAAAGTGTTCGSYCNPGNREFPAVPYSAWDFNDGKCKTASGGIESYNDPYQVRDCQLVGLLDLALEKDYVRSMIADYLNKLIDIGVAGFRIDASKHMWPGDIKAVLDKLHNLNTNWFPAGSRPFIFQEVIDLGGEAIQSSEYFGNGRVTEFKYGAKLGTVVRKWSGEKMSYLKNWGEGWGFMPSDRALVFVDNHDNQRGHGAGGASILTFWDARLYKVAVGFMLAHPYGFTRVMSSYRWARNFVNGQDVNDWIGPPNNNGVIKEVTINADTTCGNDWVCEHRWRQIRNMVWFRNVVDGQPFANWWANGSNQVAFGRGNRGFIVFNNDDWQLSSTLQTGLPGGTYCDVISGDKVGNSCTGIKVYVSSDGTAQFSISNSAEDPFIAIHAESKL.

An N-terminal signal peptide occupies residues 1–15 (MKLFLLLSAFGFCWA). Residue Gln-16 is modified to Pyrrolidone carboxylic acid. Disulfide bonds link Cys-43-Cys-101, Cys-85-Cys-130, and Cys-156-Cys-175. Asn-115, Arg-173, and Asp-182 together coordinate Ca(2+). Arg-210 serves as a coordination point for chloride. Asp-212 serves as the catalytic Nucleophile. His-216 lines the Ca(2+) pocket. Catalysis depends on Glu-248, which acts as the Proton donor. Residues Asn-313 and Arg-352 each contribute to the chloride site. Residues Cys-393 and Cys-399 are joined by a disulfide bond. The N-linked (GlcNAc...) asparagine glycan is linked to Asn-427. The cysteines at positions 465 and 477 are disulfide-linked.

This sequence belongs to the glycosyl hydrolase 13 family. Binds to the sea anemone inhibitor helianthamide and magnificamide. Ca(2+) serves as cofactor. Chloride is required as a cofactor.

Its subcellular location is the secreted. The protein resides in the extracellular space. The enzyme catalyses Endohydrolysis of (1-&gt;4)-alpha-D-glucosidic linkages in polysaccharides containing three or more (1-&gt;4)-alpha-linked D-glucose units.. This Sus scrofa (Pig) protein is Pancreatic alpha-amylase (AMY2).